Here is an 877-residue protein sequence, read N- to C-terminus: Phosphoenolpyruvate carboxylase (877 aa).

Active-site residues include H138 and K544.

Belongs to the PEPCase type 1 family. The cofactor is Mg(2+).

The enzyme catalyses oxaloacetate + phosphate = phosphoenolpyruvate + hydrogencarbonate. Its function is as follows. Forms oxaloacetate, a four-carbon dicarboxylic acid source for the tricarboxylic acid cycle. The chain is Phosphoenolpyruvate carboxylase from Vibrio vulnificus (strain YJ016).